The sequence spans 86 residues: Small ribosomal subunit protein bS16c (86 aa).

This sequence belongs to the bacterial ribosomal protein bS16 family.

Its subcellular location is the plastid. It localises to the chloroplast. The protein is Small ribosomal subunit protein bS16c of Liriodendron tulipifera (Tuliptree).